A 246-amino-acid polypeptide reads, in one-letter code: UPF0736 protein GWCH70_0753 (246 aa).

This sequence belongs to the UPF0736 family.

This Geobacillus sp. (strain WCH70) protein is UPF0736 protein GWCH70_0753.